The chain runs to 98 residues: MPLIHINIMMAFIMSLVGLLMYRSHLMSALLCLEGMMLSLFILTALLALDSHFILASMIPIILLVFAACEAAIGLALLVMISSTYGTDYVQNLNLLRC.

A run of 3 helical transmembrane segments spans residues 1–21 (MPLI…GLLM), 29–49 (ALLC…LLAL), and 61–81 (IILL…LVMI).

Belongs to the complex I subunit 4L family. As to quaternary structure, core subunit of respiratory chain NADH dehydrogenase (Complex I) which is composed of 45 different subunits.

The protein resides in the mitochondrion inner membrane. The enzyme catalyses a ubiquinone + NADH + 5 H(+)(in) = a ubiquinol + NAD(+) + 4 H(+)(out). Functionally, core subunit of the mitochondrial membrane respiratory chain NADH dehydrogenase (Complex I) which catalyzes electron transfer from NADH through the respiratory chain, using ubiquinone as an electron acceptor. Part of the enzyme membrane arm which is embedded in the lipid bilayer and involved in proton translocation. The chain is NADH-ubiquinone oxidoreductase chain 4L (MT-ND4L) from Kogia breviceps (Pygmy sperm whale).